The chain runs to 447 residues: Protein TIC 40, chloroplastic (447 aa).

Residues 1 to 43 constitute a chloroplast transit peptide; the sequence is MENLTLVSCSASSPKLLIGCNFTSSLKNPTGFSRRTPNIVLRC. Residues 44–76 constitute a chloroplast; inner membrane transit peptide; sequence SKISASAQSQSPSSRPENTGEIVVVKQRSKAFA. Residues 77 to 104 lie on the Chloroplast intermembrane side of the membrane; that stretch reads SIFSSSRDQQTTSVASPSVPVPPPSSST. The helical transmembrane segment at 105 to 125 threads the bilayer; the sequence is IGSPLFWIGVGVGLSALFSYV. The Stromal segment spans residues 126-447; it reads TSNLKKYAMQ…ISQLFPGMTG (322 aa). Residues 148-160 are compositionally biased toward low complexity; sequence QNSQFNNSGFPSG. Disordered stretches follow at residues 148 to 214 and 231 to 261; these read QNSQ…DIEV and KNYA…TNSP. A compositionally biased stretch (pro residues) spans 161–171; sequence SPFPFPFPPQT. Residues 172-186 are compositionally biased toward low complexity; it reads SPASSPFQSQSQSSG. 2 STI1 domains span residues 310-344 and 386-425; these read DPTV…RQQL and PEEV…IMKY.

In terms of assembly, part of the Tic complex. Interacts with HSP93, TIC110 and LTD. Expressed in seedlings, flowers, leaves, stems and roots.

It is found in the plastid. The protein localises to the chloroplast inner membrane. Involved in protein precursor import into chloroplasts. Part of the motor complex consisting of a co-chaperone (TIC40) and a chaperone (HSP93) associated with the import channel (TIC110). Causes the release of bound transit peptides from TIC110 and stimulates ATP hydrolysis by HSP93. Involved in reinsertion of proteins from the chloroplast stroma into the inner membrane. The sequence is that of Protein TIC 40, chloroplastic (TIC40) from Arabidopsis thaliana (Mouse-ear cress).